A 231-amino-acid chain; its full sequence is UPF0702 transmembrane protein YetF (231 aa).

3 consecutive transmembrane segments (helical) span residues 5–25 (LSVA…LKLL), 33–53 (ITPF…NAVY), and 59–79 (IKEI…IEFI).

The protein belongs to the UPF0702 family.

The protein localises to the cell membrane. The sequence is that of UPF0702 transmembrane protein YetF (yetF) from Bacillus subtilis (strain 168).